A 224-amino-acid chain; its full sequence is uncharacterized protein (224 aa).

3 residues coordinate S-adenosyl-L-methionine: glycine 177, isoleucine 197, and leucine 206.

Belongs to the class IV-like SAM-binding methyltransferase superfamily. RNA methyltransferase TrmH family.

This is an uncharacterized protein from Archaeoglobus fulgidus (strain ATCC 49558 / DSM 4304 / JCM 9628 / NBRC 100126 / VC-16).